Here is a 227-residue protein sequence, read N- to C-terminus: Testis expressed protein 56 (227 aa).

Expressed predominantly in the testis.

The chain is Testis expressed protein 56 from Mus musculus (Mouse).